A 64-amino-acid polypeptide reads, in one-letter code: MFTMKKSLLLLFFLGTIHLSLCEQERNAEEERRDDLGERQAEVEKRFLPIAGKLLSGLSGLLGK.

Residues 1 to 22 (MFTMKKSLLLLFFLGTIHLSLC) form the signal peptide. The propeptide occupies 23 to 46 (EQERNAEEERRDDLGERQAEVEKR). Residue L62 is modified to Leucine amide.

In terms of tissue distribution, expressed by the skin glands.

It is found in the secreted. In terms of biological role, antimicrobial peptide with activity against Gram-positive and Gram-negative bacteria and against fungi. Has been tested against S.aureus (MIC=1.25 ug/mL), B.pumilus (MIC=2.5 ug/mL), B.cereus (MIC=15.0 ug/mL), E.coli (MIC=1.25 ug/mL), B.dysenteriae (MIC=5.0 ug/mL), A.cacoaceticus (MIC=15.0 ug/mL), P.aeruginosa (MIC=5.0 ug/mL) and C.albicans (MIC=1.25 ug/mL). Also shows a weak hemolytic activity. The chain is Temporin-ALd from Amolops loloensis (Lolokou Sucker Frog).